The chain runs to 95 residues: uncharacterized protein (95 aa).

Positions 1 to 19 (MAILMLSLQLILLLIPSIS) are cleaved as a signal peptide. N-linked (GlcNAc...) asparagine glycosylation is found at N38 and N41.

Its subcellular location is the secreted. This is an uncharacterized protein from Homo sapiens (Human).